We begin with the raw amino-acid sequence, 588 residues long: Lysophospholipase 2 (588 aa).

The segment at 15–38 (NRALPNAPDGYTPQGETCPSKRPS) is disordered. The region spanning 31 to 574 (TCPSKRPSIR…KTYCWNGTIN (544 aa)) is the PLA2c domain. Residues Asn41, Asn58, Asn77, Asn84, Asn88, Asn119, Asn123, Asn157, Asn167, Asn228, Asn272, Asn302, Asn340, Asn431, Asn449, Asn478, Asn481, Asn501, Asn510, Asn529, Asn553, Asn570, and Asn574 are each glycosylated (N-linked (GlcNAc...) asparagine).

The protein belongs to the lysophospholipase family.

It catalyses the reaction a 1-acyl-sn-glycero-3-phosphocholine + H2O = sn-glycerol 3-phosphocholine + a fatty acid + H(+). Functionally, catalyzes the release of fatty acids from lysophospholipids. This chain is Lysophospholipase 2 (plb2), found in Aspergillus fumigatus (strain ATCC MYA-4609 / CBS 101355 / FGSC A1100 / Af293) (Neosartorya fumigata).